The chain runs to 92 residues: Small ribosomal subunit protein uS19 (92 aa).

It belongs to the universal ribosomal protein uS19 family.

Functionally, protein S19 forms a complex with S13 that binds strongly to the 16S ribosomal RNA. This Nostoc punctiforme (strain ATCC 29133 / PCC 73102) protein is Small ribosomal subunit protein uS19.